A 76-amino-acid polypeptide reads, in one-letter code: UPF0270 protein PSPA7_1664 (76 aa).

The protein belongs to the UPF0270 family.

This Pseudomonas paraeruginosa (strain DSM 24068 / PA7) (Pseudomonas aeruginosa (strain PA7)) protein is UPF0270 protein PSPA7_1664.